The sequence spans 148 residues: MFDIGFWELVVIGIVALVVLGPERLPVAIRTASHWIRLIRSTANSVKSELEQELRLQELHNDLKKAEQLQMSNLSPELQESIEQLKAAAQSVTRPYEQQNTIHPAPAAAEVKAEPAQPAAAMTHDEAPMVTTVQSTDVLADKKEEVKP.

A helical membrane pass occupies residues 1 to 21; the sequence is MFDIGFWELVVIGIVALVVLG.

The protein belongs to the TatB family. The Tat system comprises two distinct complexes: a TatABC complex, containing multiple copies of TatA, TatB and TatC subunits, and a separate TatA complex, containing only TatA subunits. Substrates initially bind to the TatABC complex, which probably triggers association of the separate TatA complex to form the active translocon.

The protein localises to the cell inner membrane. Its function is as follows. Part of the twin-arginine translocation (Tat) system that transports large folded proteins containing a characteristic twin-arginine motif in their signal peptide across membranes. Together with TatC, TatB is part of a receptor directly interacting with Tat signal peptides. TatB may form an oligomeric binding site that transiently accommodates folded Tat precursor proteins before their translocation. This chain is Sec-independent protein translocase protein TatB, found in Aeromonas salmonicida (strain A449).